A 432-amino-acid polypeptide reads, in one-letter code: Enolase (432 aa).

Glutamine 168 provides a ligand contact to (2R)-2-phosphoglycerate. Glutamate 210 acts as the Proton donor in catalysis. The Mg(2+) site is built by aspartate 247, glutamate 288, and aspartate 315. 4 residues coordinate (2R)-2-phosphoglycerate: lysine 340, arginine 369, serine 370, and lysine 391. Residue lysine 340 is the Proton acceptor of the active site.

This sequence belongs to the enolase family. Requires Mg(2+) as cofactor.

The protein localises to the cytoplasm. It is found in the secreted. The protein resides in the cell surface. It carries out the reaction (2R)-2-phosphoglycerate = phosphoenolpyruvate + H2O. It participates in carbohydrate degradation; glycolysis; pyruvate from D-glyceraldehyde 3-phosphate: step 4/5. Its function is as follows. Catalyzes the reversible conversion of 2-phosphoglycerate (2-PG) into phosphoenolpyruvate (PEP). It is essential for the degradation of carbohydrates via glycolysis. The sequence is that of Enolase from Microcystis aeruginosa (strain NIES-843 / IAM M-2473).